Reading from the N-terminus, the 422-residue chain is Imidazolonepropionase (422 aa).

Fe(3+) is bound by residues His-82 and His-84. Positions 82 and 84 each coordinate Zn(2+). The 4-imidazolone-5-propanoate site is built by Arg-91, Tyr-154, and His-187. Residue Tyr-154 participates in N-formimidoyl-L-glutamate binding. Residue His-252 coordinates Fe(3+). His-252 contacts Zn(2+). Position 255 (Glu-255) interacts with 4-imidazolone-5-propanoate. A Fe(3+)-binding site is contributed by Asp-327. Position 327 (Asp-327) interacts with Zn(2+). N-formimidoyl-L-glutamate-binding residues include Asn-329 and Gly-331. Ser-332 is a 4-imidazolone-5-propanoate binding site.

It belongs to the metallo-dependent hydrolases superfamily. HutI family. It depends on Zn(2+) as a cofactor. Requires Fe(3+) as cofactor.

It is found in the cytoplasm. It carries out the reaction 4-imidazolone-5-propanoate + H2O = N-formimidoyl-L-glutamate. Its pathway is amino-acid degradation; L-histidine degradation into L-glutamate; N-formimidoyl-L-glutamate from L-histidine: step 3/3. In terms of biological role, catalyzes the hydrolytic cleavage of the carbon-nitrogen bond in imidazolone-5-propanoate to yield N-formimidoyl-L-glutamate. It is the third step in the universal histidine degradation pathway. The sequence is that of Imidazolonepropionase from Alkaliphilus metalliredigens (strain QYMF).